Reading from the N-terminus, the 365-residue chain is Peptide chain release factor 2 (365 aa).

Q252 carries the N5-methylglutamine modification.

Belongs to the prokaryotic/mitochondrial release factor family. Post-translationally, methylated by PrmC. Methylation increases the termination efficiency of RF2.

It localises to the cytoplasm. Peptide chain release factor 2 directs the termination of translation in response to the peptide chain termination codons UGA and UAA. The protein is Peptide chain release factor 2 (prfB) of Haemophilus influenzae (strain ATCC 51907 / DSM 11121 / KW20 / Rd).